Reading from the N-terminus, the 229-residue chain is Large ribosomal subunit protein uL1c (229 aa).

Belongs to the universal ribosomal protein uL1 family. As to quaternary structure, part of the 50S ribosomal subunit.

It localises to the plastid. It is found in the chloroplast. Binds directly to 23S rRNA. Might be involved in E site tRNA release (Potential). In Porphyra purpurea (Red seaweed), this protein is Large ribosomal subunit protein uL1c (rpl1).